The chain runs to 560 residues: Membrane protein insertase YidC (560 aa).

6 consecutive transmembrane segments (helical) span residues 5–25 (IINL…WQYF), 334–354 (AIDF…MNFF), 357–377 (YVGN…LLMF), 431–451 (LPIL…YVTI), 476–496 (LFGL…WPIL), and 522–542 (FMPL…LIYW).

Belongs to the OXA1/ALB3/YidC family. Type 1 subfamily. Interacts with the Sec translocase complex via SecD. Specifically interacts with transmembrane segments of nascent integral membrane proteins during membrane integration.

Its subcellular location is the cell inner membrane. Required for the insertion and/or proper folding and/or complex formation of integral membrane proteins into the membrane. Involved in integration of membrane proteins that insert both dependently and independently of the Sec translocase complex, as well as at least some lipoproteins. Aids folding of multispanning membrane proteins. The protein is Membrane protein insertase YidC of Rickettsia rickettsii (strain Sheila Smith).